The following is a 426-amino-acid chain: tRNA (guanine(37)-N(1))-methyltransferase (426 aa).

S-adenosyl-L-methionine contacts are provided by residues His203, 242–243 (DL), 269–270 (DA), and Asn292. The segment at 374–426 (RISFKMPTLKKRKDTENNDDQENNNNSSNNNNNNKIDYNEAVSSGGEGKKIKH) is disordered. The span at 396–407 (NNNNSSNNNNNN) shows a compositional bias: low complexity.

It belongs to the class I-like SAM-binding methyltransferase superfamily. TRM5/TYW2 family. In terms of assembly, monomer.

Its subcellular location is the mitochondrion matrix. It localises to the nucleus. The protein localises to the cytoplasm. It carries out the reaction guanosine(37) in tRNA + S-adenosyl-L-methionine = N(1)-methylguanosine(37) in tRNA + S-adenosyl-L-homocysteine + H(+). Functionally, specifically methylates the N1 position of guanosine-37 in various cytoplasmic and mitochondrial tRNAs. Methylation is not dependent on the nature of the nucleoside 5' of the target nucleoside. This is the first step in the biosynthesis of wybutosine (yW), a modified base adjacent to the anticodon of tRNAs and required for accurate decoding. In Heterostelium pallidum (strain ATCC 26659 / Pp 5 / PN500) (Cellular slime mold), this protein is tRNA (guanine(37)-N(1))-methyltransferase (trmt5).